The following is an 818-amino-acid chain: H(+)/Cl(-) exchange transporter 3 (818 aa).

The Cytoplasmic segment spans residues 1–125 (MESEQLFHRG…WEMTKSLYDA (125 aa)). 3 consecutive short sequence motifs (di-leucine internalization motif; mediates targeting to late endosome and lysosome membranes) follow at residues 28 to 29 (LL), 46 to 47 (LL), and 71 to 75 (LLDLL). A helical transmembrane segment spans residues 126–163 (WSGWLVVTLTGLASGALAGLIDIAADWMTDLKEGICLS). Asn177 carries an N-linked (GlcNAc...) asparagine glycan. The helical transmembrane segment at 209–232 (MNYIMYIFWALSFAFLAVSLVKVF) threads the bilayer. The Selectivity filter part_1 motif lies at 238–242 (GSGIP). Chloride is bound at residue Ser239. The helical intramembrane region spans 241–248 (IPEIKTIL). The next 2 helical transmembrane spans lie at 258-276 (GKWT…VASG) and 282-301 (EGPL…YLFP). The Selectivity filter part_2 signature appears at 280–284 (GKEGP). 2 consecutive intramembrane regions (helical) follow at residues 313-325 (VLSA…VSVA) and 329-337 (PIGGVLFSL). The next 3 helical transmembrane spans lie at 349–367 (LWRS…RSIN), 391–416 (FPFI…AWCR), and 423–443 (FGKY…VIAF). Asn451 and Asn479 each carry an N-linked (GlcNAc...) asparagine glycan. The next 2 helical transmembrane spans lie at 500 to 520 (IWQL…TFGI) and 525 to 544 (GLFI…VGIA). The Selectivity filter part_3 signature appears at 525-529 (GLFIP). Phe527 is a binding site for chloride. 2 consecutive intramembrane regions (helical) follow at residues 572–586 (GLYA…LGGV) and 590–601 (TVSLVVIVFELT). The note=Loop between two helices intramembrane region spans 602-605 (GGLE). Residues 606 to 624 (YIVPLMAAVMTSKWVGDAF) traverse the membrane as a helical segment. At 625 to 818 (GREGIYEAHI…NQDPASIMFN (194 aa)) the chain is on the cytoplasmic side. Tyr630 contributes to the chloride binding site. 2 consecutive CBS domains span residues 658 to 722 (MRPR…ARKK) and 755 to 812 (LDMS…NQDP). Residues 689-691 (YNG) and 796-799 (TKKD) contribute to the ATP site.

Belongs to the chloride channel (TC 2.A.49) family. ClC-3/CLCN3 subfamily. As to quaternary structure, monomer and homodimer. Forms heterodimers with CLCN4. In terms of assembly, interacts with GOPC, PDZK1 and NHERF1/EBP50. Post-translationally, N-glycosylated. In terms of tissue distribution, expressed primarily in tissues derived from neuroectoderm. Within the brain, its expression is particularly evident in the hippocampus, olfactory cortex, and olfactory bulb. Highly expressed in aortic and coronary vascular smooth muscle cells, and aortic endothelial cells. Also expressed in tracheal and alveolar epithelial cells, and intima and media of the pulmonary vessels. Expressed in bronchus and colon (at protein level).

It is found in the early endosome membrane. It localises to the late endosome membrane. The protein localises to the lysosome membrane. Its subcellular location is the cell membrane. The protein resides in the golgi apparatus membrane. It is found in the cell projection. It localises to the ruffle membrane. Its function is as follows. Strongly outwardly rectifying, electrogenic H(+)/Cl(-)exchanger which mediates the exchange of chloride ions against protons. The CLC channel family contains both chloride channels and proton-coupled anion transporters that exchange chloride or another anion for protons. The presence of conserved gating glutamate residues is typical for family members that function as antiporters. Strongly outwardly rectifying, electrogenic H(+)/Cl(-)exchanger which mediates the exchange of chloride ions against protons. This chain is H(+)/Cl(-) exchange transporter 3 (CLCN3), found in Homo sapiens (Human).